Reading from the N-terminus, the 194-residue chain is ATP-dependent Clp protease proteolytic subunit (194 aa).

Ser98 acts as the Nucleophile in catalysis. Residue His123 is part of the active site.

It belongs to the peptidase S14 family. In terms of assembly, fourteen ClpP subunits assemble into 2 heptameric rings which stack back to back to give a disk-like structure with a central cavity, resembling the structure of eukaryotic proteasomes.

The protein localises to the cytoplasm. The enzyme catalyses Hydrolysis of proteins to small peptides in the presence of ATP and magnesium. alpha-casein is the usual test substrate. In the absence of ATP, only oligopeptides shorter than five residues are hydrolyzed (such as succinyl-Leu-Tyr-|-NHMec, and Leu-Tyr-Leu-|-Tyr-Trp, in which cleavage of the -Tyr-|-Leu- and -Tyr-|-Trp bonds also occurs).. Its function is as follows. Cleaves peptides in various proteins in a process that requires ATP hydrolysis. Has a chymotrypsin-like activity. Plays a major role in the degradation of misfolded proteins. In Staphylococcus epidermidis (strain ATCC 35984 / DSM 28319 / BCRC 17069 / CCUG 31568 / BM 3577 / RP62A), this protein is ATP-dependent Clp protease proteolytic subunit.